A 1083-amino-acid chain; its full sequence is Integrator complex subunit 3 homolog (1083 aa).

Disordered stretches follow at residues 551–579 (NEAV…DLPL), 929–953 (YPSS…TPSA), and 1014–1083 (AVGR…NDSD). The span at 942–953 (KGSSAASSTPSA) shows a compositional bias: low complexity. Residues S1053, S1054, S1058, and S1059 each carry the phosphoserine modification. Positions 1066-1077 (HKVTQPAKKRKK) are enriched in basic residues.

It belongs to the Integrator subunit 3 family. In terms of assembly, belongs to the multiprotein complex Integrator, at least composed of IntS1, IntS2, IntS3, IntS4, omd/IntS5, IntS6, defl/IntS7, IntS8, IntS9, IntS10, IntS11, IntS12, asun/IntS13, IntS14 and IntS15. The core complex associates with protein phosphatase 2A subunits mts/PP2A and Pp2A-29B, to form the Integrator-PP2A (INTAC) complex.

It is found in the nucleus. The protein resides in the cytoplasm. Functionally, component of the integrator complex, a multiprotein complex that terminates RNA polymerase II (Pol II) transcription in the promoter-proximal region of genes. The integrator complex provides a quality checkpoint during transcription elongation by driving premature transcription termination of transcripts that are unfavorably configured for transcriptional elongation: the complex terminates transcription by (1) catalyzing dephosphorylation of the C-terminal domain (CTD) of Pol II subunit Polr2A/Rbp1 and Spt5, and (2) degrading the exiting nascent RNA transcript via endonuclease activity. The integrator complex is also involved in the 3'-end processing of the U7 snRNA, and also the spliceosomal snRNAs U1, U2, U4 and U5. This is Integrator complex subunit 3 homolog (IntS3) from Drosophila grimshawi (Hawaiian fruit fly).